Consider the following 417-residue polypeptide: Probable histone-binding protein lin-53 (417 aa).

6 WD repeats span residues 118-158 (NHEG…AVPR), 170-210 (GHTK…NVAG), 220-260 (GHES…PGHC), 263-303 (AHSA…MKLH), 307-347 (SHRD…EDQS), and 364-404 (GHTA…YNEV).

Belongs to the WD repeat RBAP46/RBAP48/MSI1 family. Binds directly to helix 1 of the histone fold of histone H4, a region that is not accessible when H4 is in chromatin. Probable component of a NuRD-like complex, composed of at least lin-53 and hda-1. Interacts with lin-35. Interacts with hda-1; the interaction is direct. Component of the DRM complex, at least composed of lin-9, lin-35, lin-37, lin-52, lin-53, lin-54- dpl-1 and efl-1. Interacts with hcp-3.

It localises to the nucleus. The protein resides in the chromosome. It is found in the centromere. In terms of biological role, core histone-binding subunit that may target chromatin assembly factors, chromatin remodeling factors and histone deacetylases to their histone substrates in a manner that is regulated by nucleosomal DNA. Required for hcp-3 and his-1 stabilization, localization of hcp-3 to centromeres and for proper chromosome segregation. Synthetic multivulva class B (synMuvB) protein. SynMuvB proteins are required to repress the induction of vulval development by Ras signaling and probably act by forming the multiprotein DRM complex that represses transcription. The chain is Probable histone-binding protein lin-53 from Caenorhabditis elegans.